Consider the following 145-residue polypeptide: 3-hydroxyacyl-[acyl-carrier-protein] dehydratase FabZ (145 aa).

The active site involves H47.

This sequence belongs to the thioester dehydratase family. FabZ subfamily.

Its subcellular location is the cytoplasm. It carries out the reaction a (3R)-hydroxyacyl-[ACP] = a (2E)-enoyl-[ACP] + H2O. Functionally, involved in unsaturated fatty acids biosynthesis. Catalyzes the dehydration of short chain beta-hydroxyacyl-ACPs and long chain saturated and unsaturated beta-hydroxyacyl-ACPs. This Vesicomyosocius okutanii subsp. Calyptogena okutanii (strain HA) protein is 3-hydroxyacyl-[acyl-carrier-protein] dehydratase FabZ.